Reading from the N-terminus, the 149-residue chain is Large ribosomal subunit protein bL9 (149 aa).

It belongs to the bacterial ribosomal protein bL9 family.

In terms of biological role, binds to the 23S rRNA. The protein is Large ribosomal subunit protein bL9 of Rubrobacter xylanophilus (strain DSM 9941 / JCM 11954 / NBRC 16129 / PRD-1).